The sequence spans 70 residues: Melittin (70 aa).

The first 21 residues, 1–21, serve as a signal peptide directing secretion; that stretch reads MKFLVNVALVFMVVYISYIYA. Positions 22-43 are cleaved as a propeptide — removed by a dipeptidylpeptidase; that stretch reads APEPEPAPEPEAEADAEADPEA. Gly-44 carries the N-formylglycine; partial modification. A Glutamine amide modification is found at Gln-69.

The protein belongs to the melittin family. In terms of assembly, monomer (in solution and for integration into membranes), homotetramer (in solution and potentially as a toroidal pore in membranes), and potenially homomultimer (as a toroidal pore in membranes). Expressed by the venom gland.

It localises to the secreted. The protein resides in the target cell membrane. Functionally, melittin: Main toxin of bee venom with strong antimicrobial activity and hemolytic activity. It has enhancing effects on bee venom phospholipase A2 activity. This amphipathic toxin binds to negatively charged membrane surface and forms pore by inserting into lipid bilayers inducing the leakage of ions and molecules and the enhancement of permeability that ultimately leads to cell lysis. It acts as a voltage-gated pore with higher selectivity for anions over cations. The ion conductance has been shown to be voltage-dependent. Self-association of melittin in membranes is promoted by high ionic strength, but not by the presence of negatively charged lipids. In vivo, intradermal injection into healthy human volunteers produce sharp pain sensation and an inflammatory response. It produces pain by activating primary nociceptor cells directly and indirectly due to its ability to activate plasma membrane phospholipase A2 and its pore-forming activity. In the context of inflammation and cancer tests, is highly cytotoxic to normal cells, highly induces calcium signaling and almost completely prevents cAMP production. In addition, prevents LPS-induced nitric oxid (NO) synthesis but does not affect the IP3 signaling and pro-inflammatory activation of endothelial cells. Also shows significant antiproliferative activity on the breast cancer cell line MDA-MB-231. Its function is as follows. Melittin-S: 1.4-fold less hemolytic and adopts a less organized secondary structure than melittin. Melittin-2: Has strong hemolytic activity. This chain is Melittin (MELT), found in Apis mellifera (Honeybee).